Here is a 266-residue protein sequence, read N- to C-terminus: Large ribosomal subunit protein eL8 (266 aa).

Positions 104-130 are enriched in basic and acidic residues; sequence PETKQEKKQRLLARAEQKAAGKGDTPT. The disordered stretch occupies residues 104–135; the sequence is PETKQEKKQRLLARAEQKAAGKGDTPTKRPPV.

This sequence belongs to the eukaryotic ribosomal protein eL8 family. As to quaternary structure, component of the large ribosomal subunit.

It localises to the cytoplasm. Its function is as follows. Component of the large ribosomal subunit. The ribosome is a large ribonucleoprotein complex responsible for the synthesis of proteins in the cell. In Gallus gallus (Chicken), this protein is Large ribosomal subunit protein eL8 (RPL7A).